Reading from the N-terminus, the 628-residue chain is Probable alpha-L-arabinofuranosidase A (628 aa).

The signal sequence occupies residues 1-25 (MVAFSALSGVSAVSLLLSLVQNAHG). N-linked (GlcNAc...) asparagine glycosylation is found at asparagine 36, asparagine 51, asparagine 74, asparagine 152, asparagine 171, asparagine 260, asparagine 359, asparagine 440, asparagine 493, and asparagine 610.

The protein belongs to the glycosyl hydrolase 51 family.

The protein resides in the secreted. The catalysed reaction is Hydrolysis of terminal non-reducing alpha-L-arabinofuranoside residues in alpha-L-arabinosides.. Its pathway is glycan metabolism; L-arabinan degradation. Functionally, alpha-L-arabinofuranosidase involved in the degradation of arabinoxylan, a major component of plant hemicellulose. Acts only on small linear 1,5-alpha-linked L-arabinofuranosyl oligosaccharides. The sequence is that of Probable alpha-L-arabinofuranosidase A (abfA) from Aspergillus niger (strain ATCC MYA-4892 / CBS 513.88 / FGSC A1513).